We begin with the raw amino-acid sequence, 833 residues long: Urease (833 aa).

The Urease domain occupies 395–833 (GALDVHVHYI…LPLTKRYFVY (439 aa)). Ni(2+)-binding residues include His-400 and His-402. The urea site is built by His-402 and Ala-433. Lys-483 contacts Ni(2+). N6-carboxylysine is present on Lys-483. The urea site is built by His-485 and His-512. Ni(2+)-binding residues include His-512 and His-538. The active-site Proton donor is the His-586. Asp-626 contributes to the Ni(2+) binding site. A urea-binding site is contributed by Ala-629.

It in the C-terminal section; belongs to the metallo-dependent hydrolases superfamily. Urease alpha subunit family. As to quaternary structure, homohexamer. Ni(2+) is required as a cofactor. Post-translationally, carboxylation allows a single lysine to coordinate two nickel ions.

It carries out the reaction urea + 2 H2O + H(+) = hydrogencarbonate + 2 NH4(+). It participates in nitrogen metabolism; urea degradation; CO(2) and NH(3) from urea (urease route): step 1/1. Its activity is regulated as follows. The urease accessory proteins URE4, URE6 and URE7 are required for urease activity, URE7 supplying nickel for the functional urease. Plays a nutritional role via nitrogen acquisition in the environment. Contributes to the central nervous system invasion by enhancing yeast sequestration within microcapillary beds (such as within the brain) during hematogenous spread, thereby facilitating blood-to-brain invasion by C.neoformans. Affects fitness within the mammalian phagosome, promoting non-lytic exocytosis while delaying intracellular replication and thus reducing phagolysosomal membrane damage, events that could facilitate cryptococcal dissemination when transported inside macrophages. Urease activity is also associated with the regulation of key intracellular metabolic pathways, including melanin biosynthesis, polyamine biosynthesis, as well as intracellular levels of proline and reactive oxygen species. The polypeptide is Urease (Cryptococcus neoformans var. neoformans serotype D (strain B-3501A) (Filobasidiella neoformans)).